The following is a 164-amino-acid chain: MTEFTHINQQGHAKMVDVSDKQITKRTAVAHSSITVNETIYKQISNNTNTKGNVLNTAQIAGIMAAKNTSTIIPMCHPLPLTGIDVHFSWDETNAPLYTLNIQTTVSTTGKTGVEMEALTAASATALTIYDMTKAVDKGMIIGETYLESKSGGKSGDFQRQSGQ.

Substrate-binding positions include 75-77 and 116-117; these read MCH and ME. Asp131 is an active-site residue.

Belongs to the MoaC family. In terms of assembly, homohexamer; trimer of dimers.

It carries out the reaction (8S)-3',8-cyclo-7,8-dihydroguanosine 5'-triphosphate = cyclic pyranopterin phosphate + diphosphate. Its pathway is cofactor biosynthesis; molybdopterin biosynthesis. Its function is as follows. Catalyzes the conversion of (8S)-3',8-cyclo-7,8-dihydroguanosine 5'-triphosphate to cyclic pyranopterin monophosphate (cPMP). The sequence is that of Cyclic pyranopterin monophosphate synthase from Staphylococcus aureus (strain bovine RF122 / ET3-1).